Consider the following 200-residue polypeptide: 3-isopropylmalate dehydratase small subunit (200 aa).

This sequence belongs to the LeuD family. LeuD type 1 subfamily. Heterodimer of LeuC and LeuD.

It catalyses the reaction (2R,3S)-3-isopropylmalate = (2S)-2-isopropylmalate. It participates in amino-acid biosynthesis; L-leucine biosynthesis; L-leucine from 3-methyl-2-oxobutanoate: step 2/4. In terms of biological role, catalyzes the isomerization between 2-isopropylmalate and 3-isopropylmalate, via the formation of 2-isopropylmaleate. The chain is 3-isopropylmalate dehydratase small subunit from Vibrio cholerae serotype O1 (strain ATCC 39541 / Classical Ogawa 395 / O395).